Reading from the N-terminus, the 539-residue chain is Chaperonin GroEL 1 (539 aa).

ATP is bound by residues 29–32 (TLGP), 86–90 (DGTTT), G413, and D495.

Belongs to the chaperonin (HSP60) family. In terms of assembly, forms a cylinder of 14 subunits composed of two heptameric rings stacked back-to-back. Interacts with the co-chaperonin GroES.

It localises to the cytoplasm. The enzyme catalyses ATP + H2O + a folded polypeptide = ADP + phosphate + an unfolded polypeptide.. Together with its co-chaperonin GroES, plays an essential role in assisting protein folding. The GroEL-GroES system forms a nano-cage that allows encapsulation of the non-native substrate proteins and provides a physical environment optimized to promote and accelerate protein folding. In Mycobacterium bovis (strain ATCC BAA-935 / AF2122/97), this protein is Chaperonin GroEL 1.